We begin with the raw amino-acid sequence, 553 residues long: Probable bifunctional riboflavin biosynthesis protein RIBA 2, chloroplastic (553 aa).

The transit peptide at 1–56 directs the protein to the chloroplast; sequence MASISPTSSSVAALRGHPVQFVKGGAVSKEAKGSISFSPVANSNNANVKFTGLRVA. The tract at residues 62 to 336 is DHBP synthase; the sequence is DGAFPGDGYS…IADLIRYRRK (275 aa). The disordered stretch occupies residues 70 to 90; it reads YSGNDNTVLPKSTSVRGQDYP. Residues 72–85 show a composition bias toward polar residues; sequence GNDNTVLPKSTSVR. D-ribulose 5-phosphate is bound by residues 160–161, aspartate 165, 275–279, and glutamate 299; these read RE and RAGHT. Glutamate 161 contacts Mg(2+). A Mg(2+)-binding site is contributed by histidine 278. The GTP cyclohydrolase II stretch occupies residues 337 to 553; the sequence is RDRLVERSSV…TGSNGAKGEH (217 aa). Residue 387-391 coordinates GTP; sequence RVHSE. Zn(2+)-binding residues include cysteine 392, cysteine 403, and cysteine 405. GTP is bound by residues glutamine 408, 431–433, and threonine 453; that span reads EGR. Aspartate 465 serves as the catalytic Proton acceptor; for GTP cyclohydrolase activity. Arginine 467 serves as the catalytic Nucleophile; for GTP cyclohydrolase activity. Residues threonine 488 and lysine 493 each coordinate GTP.

It in the N-terminal section; belongs to the DHBP synthase family. The protein in the C-terminal section; belongs to the GTP cyclohydrolase II family. It depends on Mg(2+) as a cofactor. Mn(2+) serves as cofactor. Zn(2+) is required as a cofactor.

Its subcellular location is the plastid. The protein resides in the chloroplast. The catalysed reaction is D-ribulose 5-phosphate = (2S)-2-hydroxy-3-oxobutyl phosphate + formate + H(+). The enzyme catalyses GTP + 4 H2O = 2,5-diamino-6-hydroxy-4-(5-phosphoribosylamino)-pyrimidine + formate + 2 phosphate + 3 H(+). It participates in cofactor biosynthesis; riboflavin biosynthesis; 2-hydroxy-3-oxobutyl phosphate from D-ribulose 5-phosphate: step 1/1. Its pathway is cofactor biosynthesis; riboflavin biosynthesis; 5-amino-6-(D-ribitylamino)uracil from GTP: step 1/4. Its function is as follows. Involved in riboflavin biosynthesis. Catalyzes both the conversion of D-ribulose 5-phosphate to formate and 3,4-dihydroxy-2-butanone 4-phosphate and the conversion of GTP to 2,5-diamino-6-ribosylamino-4(3H)-pyrimidinone 5'-phosphate (DARP), formate and pyrophosphate. In Oryza sativa subsp. japonica (Rice), this protein is Probable bifunctional riboflavin biosynthesis protein RIBA 2, chloroplastic (RIBA2).